The following is a 984-amino-acid chain: Detocs histidine-protein kinase DtcA (984 aa).

At H645 the chain carries Phosphohistidine; by autocatalysis.

Post-translationally, autophosphorylated.

The catalysed reaction is ATP + protein L-histidine = ADP + protein N-phospho-L-histidine.. Functionally, sensor-kinase member of the two-component regulatory system Detocs that confers resistance to bacteriophage. When the system (DtcA-DtcB-DtcC) is expressed in a susceptible E.coli (strain MG1655) it confers resistance to bacteriophages T2, T4, T5, T6 and SECphi27. Detocs inhibits T5 infection leading to growth arrest but not complete cell lysis, during SECphi27 infection leads to cell lysis. DtcA (this subunit) probably autophosphorylates upon sensing viral infection, and subsequently transfers the phosphate signal to DtcC which activates it, leading to an antiviral defense; DtcB may scavenge phosphorylation signals from accidental activation of DtcA. This Vibrio alginolyticus protein is Detocs histidine-protein kinase DtcA.